A 64-amino-acid polypeptide reads, in one-letter code: Large ribosomal subunit protein bL28 (64 aa).

This sequence belongs to the bacterial ribosomal protein bL28 family.

This Elusimicrobium minutum (strain Pei191) protein is Large ribosomal subunit protein bL28.